Here is a 137-residue protein sequence, read N- to C-terminus: Large ribosomal subunit protein uL16 (137 aa).

Belongs to the universal ribosomal protein uL16 family. As to quaternary structure, part of the 50S ribosomal subunit.

In terms of biological role, binds 23S rRNA and is also seen to make contacts with the A and possibly P site tRNAs. The sequence is that of Large ribosomal subunit protein uL16 from Aromatoleum aromaticum (strain DSM 19018 / LMG 30748 / EbN1) (Azoarcus sp. (strain EbN1)).